Reading from the N-terminus, the 172-residue chain is Photosystem I assembly protein Ycf3 (172 aa).

3 TPR repeats span residues 35 to 68 (AFSY…EVDA), 72 to 105 (SYIL…NPSL), and 120 to 153 (GEQA…APTN).

This sequence belongs to the Ycf3 family.

Its subcellular location is the plastid. The protein resides in the chloroplast thylakoid membrane. Functionally, essential for the assembly of the photosystem I (PSI) complex. May act as a chaperone-like factor to guide the assembly of the PSI subunits. The polypeptide is Photosystem I assembly protein Ycf3 (Chlamydomonas reinhardtii (Chlamydomonas smithii)).